A 277-amino-acid chain; its full sequence is Digeranylgeranylglyceryl phosphate synthase (277 aa).

The next 8 helical transmembrane spans lie at 16 to 36, 40 to 60, 83 to 105, 107 to 124, 146 to 166, 202 to 222, 224 to 244, and 256 to 276; these read LLAGIVGVLGSIVAAGGLPEL, ILVFLVVFLGCAGGNTINDYF, AALWYSVALFATGIVLAWFINIW, FLLAIVAYVTMFIYAWKL, GAIAVGEIGLAGTLALCAFLV, VGALFAILTVVASFLPIKAGI, LGYLAMLPVDAVILYSAFLIL, and QILLKVSVFLAVVAFLIASLV.

This sequence belongs to the UbiA prenyltransferase family. DGGGP synthase subfamily. It depends on Mg(2+) as a cofactor.

Its subcellular location is the cell membrane. The catalysed reaction is sn-3-O-(geranylgeranyl)glycerol 1-phosphate + (2E,6E,10E)-geranylgeranyl diphosphate = 2,3-bis-O-(geranylgeranyl)-sn-glycerol 1-phosphate + diphosphate. Its pathway is membrane lipid metabolism; glycerophospholipid metabolism. In terms of biological role, prenyltransferase that catalyzes the transfer of the geranylgeranyl moiety of geranylgeranyl diphosphate (GGPP) to the C2 hydroxyl of (S)-3-O-geranylgeranylglyceryl phosphate (GGGP). This reaction is the second ether-bond-formation step in the biosynthesis of archaeal membrane lipids. In Thermococcus kodakarensis (strain ATCC BAA-918 / JCM 12380 / KOD1) (Pyrococcus kodakaraensis (strain KOD1)), this protein is Digeranylgeranylglyceryl phosphate synthase.